Consider the following 424-residue polypeptide: Spermatogenesis-associated protein 2-like protein (424 aa).

Disordered stretches follow at residues 233-258 and 273-300; these read EDEGSEDASLYGEPSPGPDSPPAELA and TGGRAWEPPAEELPQASSPPYGALEEGL. The residue at position 327 (Ser327) is a Phosphoserine.

It belongs to the SPATA2 family.

This is Spermatogenesis-associated protein 2-like protein from Homo sapiens (Human).